Reading from the N-terminus, the 473-residue chain is Photosystem II CP43 reaction center protein (473 aa).

Positions 1–14 (MKTLYSLRRFYHVE) are excised as a propeptide. Residue Thr15 is modified to N-acetylthreonine. Thr15 carries the phosphothreonine modification. A run of 5 helical transmembrane segments spans residues 69 to 93 (LFEV…PHLA), 134 to 155 (LIGP…KDKN), 178 to 200 (KAVW…RKIT), 255 to 275 (KPFA…LSYS), and 291 to 312 (WFNN…ASQA). Glu367 serves as a coordination point for [CaMn4O5] cluster. The chain crosses the membrane as a helical span at residues 447-471 (RARAAAAGFEKGIDRETEPVFFMNP).

Belongs to the PsbB/PsbC family. PsbC subfamily. PSII is composed of 1 copy each of membrane proteins PsbA, PsbB, PsbC, PsbD, PsbE, PsbF, PsbH, PsbI, PsbJ, PsbK, PsbL, PsbM, PsbT, PsbX, PsbY, PsbZ, Psb30/Ycf12, at least 3 peripheral proteins of the oxygen-evolving complex and a large number of cofactors. It forms dimeric complexes. Requires Binds multiple chlorophylls and provides some of the ligands for the Ca-4Mn-5O cluster of the oxygen-evolving complex. It may also provide a ligand for a Cl- that is required for oxygen evolution. PSII binds additional chlorophylls, carotenoids and specific lipids. as cofactor.

Its subcellular location is the plastid. The protein resides in the chloroplast thylakoid membrane. Functionally, one of the components of the core complex of photosystem II (PSII). It binds chlorophyll and helps catalyze the primary light-induced photochemical processes of PSII. PSII is a light-driven water:plastoquinone oxidoreductase, using light energy to abstract electrons from H(2)O, generating O(2) and a proton gradient subsequently used for ATP formation. This chain is Photosystem II CP43 reaction center protein, found in Staurastrum punctulatum (Green alga).